A 394-amino-acid polypeptide reads, in one-letter code: Na(+)/H(+) antiporter NhaA (394 aa).

Helical transmembrane passes span 14–34, 59–79, 95–115, 125–145, 154–174, 179–199, 213–233, 254–274, 292–312, 328–348, and 363–383; these read AGGLILIIAAAIALLMANSAL, LLLWINDGLMAVFFLMIGLEV, VFPAIAALGGMLAPALIYLLF, GWAIPAATDIAFALGVMALLG, VFLLALAIIDDLGVIIIIALF, VSLQSLGIAAAAIALLAYMNW, LVLWVCILKSGVHATLAGVIV, GLHPWVAYLILPLFAFANAGV, IATGLFIGKPLGIFTFSWLAV, IFAVSVLCGIGFTMSIFIASL, and LGILLGSTTAAVVGYSLLRLV.

This sequence belongs to the NhaA Na(+)/H(+) (TC 2.A.33) antiporter family.

Its subcellular location is the cell inner membrane. It carries out the reaction Na(+)(in) + 2 H(+)(out) = Na(+)(out) + 2 H(+)(in). Na(+)/H(+) antiporter that extrudes sodium in exchange for external protons. The sequence is that of Na(+)/H(+) antiporter NhaA from Yersinia pestis bv. Antiqua (strain Angola).